A 75-amino-acid chain; its full sequence is Small ribosomal subunit protein eS28 (75 aa).

It belongs to the eukaryotic ribosomal protein eS28 family.

The polypeptide is Small ribosomal subunit protein eS28 (Natronomonas pharaonis (strain ATCC 35678 / DSM 2160 / CIP 103997 / JCM 8858 / NBRC 14720 / NCIMB 2260 / Gabara) (Halobacterium pharaonis)).